Consider the following 86-residue polypeptide: Large ribosomal subunit protein bL31 (86 aa).

Residues 65 to 86 are disordered; that stretch reads YRMASSDSSEQKDKSSEEKKES. Residues 73 to 86 are compositionally biased toward basic and acidic residues; sequence SEQKDKSSEEKKES.

This sequence belongs to the bacterial ribosomal protein bL31 family. Type A subfamily. Part of the 50S ribosomal subunit.

Functionally, binds the 23S rRNA. The polypeptide is Large ribosomal subunit protein bL31 (Prochlorococcus marinus (strain NATL1A)).